The following is an 85-amino-acid chain: Prosialokinin (85 aa).

A signal peptide spans 1–23; it reads MNMFITVQIVIVLVLAVLSEAAS. The propeptide occupies 24 to 74; the sequence is LPTATERKDAMDEGPNQSDEPEGSVADPSTKDDDYSDSLKQDEKYYKVRLL. The segment at 26–61 is disordered; that stretch reads TATERKDAMDEGPNQSDEPEGSVADPSTKDDDYSDS. Residues 52–61 show a composition bias toward basic and acidic residues; the sequence is STKDDDYSDS. At M84 the chain carries Methionine amide.

This sequence belongs to the tachykinin family. Expressed exclusively in the medial lobe of female salivary gland. Not detected in female carcass without head and salivary glands. Not detected in male tissues.

It localises to the secreted. Functionally, vasodilatory peptide. Facilitates mosquito blood feeding on vertebrate host. Induces nitric oxide (NO) release in blood vessels through the activation of the nitric oxide synthase (NOS3). Enhances endothelial permeability and induces edema at the site of inoculation in the host. Induces host smooth muscle contraction. Down-regulates production of Th1 cytokines, such as IL2 and IFN-gamma (IFNG), in mouse splenocytes. Up-regulates production of Th2 cytokines, such as IL4 and IL10, in mouse splenocytes. Promotes recruitment of host leukocytes, especially neutrophils and CD8+ T cells, to the bite site. Modulates cytokine production by host macrophages. Modulates populations of monocytes/macrophages, plasmacytoid dendritic cells, B cells, CD4+ T cells, NK and NKT cells, shifting mammalian immunity towards Th2 responses. Its function is as follows. (Microbial infection) Promotes Semliki Forest virus infection in the host. (Microbial infection) Does not affect Zika virus replication in the host. The protein is Prosialokinin of Aedes aegypti (Yellowfever mosquito).